The following is a 262-amino-acid chain: Ribosomal RNA small subunit methyltransferase A (262 aa).

H11, I13, G38, E60, D85, and N105 together coordinate S-adenosyl-L-methionine.

Belongs to the class I-like SAM-binding methyltransferase superfamily. rRNA adenine N(6)-methyltransferase family. RsmA subfamily.

The protein localises to the cytoplasm. The enzyme catalyses adenosine(1518)/adenosine(1519) in 16S rRNA + 4 S-adenosyl-L-methionine = N(6)-dimethyladenosine(1518)/N(6)-dimethyladenosine(1519) in 16S rRNA + 4 S-adenosyl-L-homocysteine + 4 H(+). Specifically dimethylates two adjacent adenosines (A1518 and A1519) in the loop of a conserved hairpin near the 3'-end of 16S rRNA in the 30S particle. May play a critical role in biogenesis of 30S subunits. The protein is Ribosomal RNA small subunit methyltransferase A of Neorickettsia sennetsu (strain ATCC VR-367 / Miyayama) (Ehrlichia sennetsu).